A 651-amino-acid polypeptide reads, in one-letter code: UvrABC system protein B (651 aa).

Residues 25–178 enclose the Helicase ATP-binding domain; it reads RGISCGAKEQ…CQLQERLVEL (154 aa). 38–45 lines the ATP pocket; it reads GVTGSGKT. Positions 91–114 match the Beta-hairpin motif; it reads YYDYYQPEAYIPQSDVYIEKDALI. The region spanning 427 to 591 is the Helicase C-terminal domain; sequence DGQIHDVMCE…IVPRTIQKPV (165 aa). The disordered stretch occupies residues 593-615; that stretch reads TSLSERVGSSRKKVSRDTNTDPA. A UVR domain is found at 616–651; that stretch reads NRDIVELQKEMLLCAENLDFERAVEIRNEIKRLTAP.

It belongs to the UvrB family. In terms of assembly, forms a heterotetramer with UvrA during the search for lesions. Interacts with UvrC in an incision complex.

It is found in the cytoplasm. Functionally, the UvrABC repair system catalyzes the recognition and processing of DNA lesions. A damage recognition complex composed of 2 UvrA and 2 UvrB subunits scans DNA for abnormalities. Upon binding of the UvrA(2)B(2) complex to a putative damaged site, the DNA wraps around one UvrB monomer. DNA wrap is dependent on ATP binding by UvrB and probably causes local melting of the DNA helix, facilitating insertion of UvrB beta-hairpin between the DNA strands. Then UvrB probes one DNA strand for the presence of a lesion. If a lesion is found the UvrA subunits dissociate and the UvrB-DNA preincision complex is formed. This complex is subsequently bound by UvrC and the second UvrB is released. If no lesion is found, the DNA wraps around the other UvrB subunit that will check the other stand for damage. The sequence is that of UvrABC system protein B from Anaplasma marginale (strain Florida).